A 462-amino-acid chain; its full sequence is METAGATADATAGPQKLSRKKYLALRKKERRKRRRQALARLREAELAQKEEEEDPLAEEKRLEEERLLEEERQRLHEEWLLREEKAQEEFRAKKKKEEEARKRKEELERKLKAEWEEQQRKEREEEEQKRQEKREREEAVQKMLDQAENELENGGTWQNPEPPMDIRVLEKDRANCPFYSKTGACRFGDRCSRKHNFPTSSPTLLIKGMFTTFGMEQCRRDDYDPDSSLEFSEEEIYQQFLDFYYDVLPEFKSVGKVIQFKVSCNLEPHLRGNVYVQYQSEEDCQAAFSVFNGRWYAGRQLQCEFCPVTRWKMAICGLFEVQQCPRGKHCNFLHVFRNPNNEYRDANRDLYPSPDWTSSSFGKNSERRERASHYDEYYGRSRRRRRSPSPDFYKRNGESDRKSSSRHRVKKSHRYGMKSRERRSSPSRRRKDHSPGPWEPEQEEPPQQESQSQPQPQPQSDP.

Residues 1 to 13 (METAGATADATAG) are compositionally biased toward low complexity. 3 disordered regions span residues 1–22 (METAGATADATAGPQKLSRKKY), 44–66 (AELAQKEEEEDPLAEEKRLEEER), and 115–138 (WEEQQRKEREEEEQKRQEKREREE). Residue Lys-49 forms a Glycyl lysine isopeptide (Lys-Gly) (interchain with G-Cter in SUMO2) linkage. A compositionally biased stretch (basic and acidic residues) spans 57–66 (AEEKRLEEER). Residues 170 to 198 (EKDRANCPFYSKTGACRFGDRCSRKHNFP) form a C3H1-type 1 zinc finger. An RRM domain is found at 202–308 (PTLLIKGMFT…RQLQCEFCPV (107 aa)). A C3H1-type 2 zinc finger spans residues 310–337 (RWKMAICGLFEVQQCPRGKHCNFLHVFR). Position 353 is a phosphoserine (Ser-353). The interval 354 to 462 (PDWTSSSFGK…QPQPQPQSDP (109 aa)) is disordered. The span at 364-379 (NSERRERASHYDEYYG) shows a compositional bias: basic and acidic residues. Residue Ser-389 is modified to Phosphoserine. Residues 392–403 (FYKRNGESDRKS) show a composition bias toward basic and acidic residues. Residues 404 to 417 (SSRHRVKKSHRYGM) show a composition bias toward basic residues.

In terms of assembly, component of the U11/U12 snRNPs that are part of the U12-type spliceosome. Interacts (via RS domain) with SRSF1 and SRSF2. Interacts with U2AF2/U2AF65. Phosphorylated in the RS domain by SRPK1.

The protein resides in the nucleus. Its function is as follows. Pre-mRNA-binding protein required for splicing of both U2- and U12-type introns. Selectively interacts with the 3'-splice site of U2- and U12-type pre-mRNAs and promotes different steps in U2 and U12 intron splicing. Recruited to U12 pre-mRNAs in an ATP-dependent manner and is required for assembly of the prespliceosome, a precursor to other spliceosomal complexes. For U2-type introns, it is selectively and specifically required for the second step of splicing. This is U2 small nuclear ribonucleoprotein auxiliary factor 35 kDa subunit-related protein 2 (Zrsr2) from Mus musculus (Mouse).